Here is a 250-residue protein sequence, read N- to C-terminus: 5-oxoprolinase subunit A (250 aa).

It belongs to the LamB/PxpA family. Forms a complex composed of PxpA, PxpB and PxpC.

It carries out the reaction 5-oxo-L-proline + ATP + 2 H2O = L-glutamate + ADP + phosphate + H(+). In terms of biological role, catalyzes the cleavage of 5-oxoproline to form L-glutamate coupled to the hydrolysis of ATP to ADP and inorganic phosphate. The protein is 5-oxoprolinase subunit A of Streptomyces griseus subsp. griseus (strain JCM 4626 / CBS 651.72 / NBRC 13350 / KCC S-0626 / ISP 5235).